The following is a 175-amino-acid chain: ATP-dependent protease subunit HslV (175 aa).

Thr-2 is a catalytic residue. Na(+)-binding residues include Ala-156, Cys-159, and Thr-162.

This sequence belongs to the peptidase T1B family. HslV subfamily. In terms of assembly, a double ring-shaped homohexamer of HslV is capped on each side by a ring-shaped HslU homohexamer. The assembly of the HslU/HslV complex is dependent on binding of ATP.

The protein localises to the cytoplasm. The enzyme catalyses ATP-dependent cleavage of peptide bonds with broad specificity.. Allosterically activated by HslU binding. Its function is as follows. Protease subunit of a proteasome-like degradation complex believed to be a general protein degrading machinery. The chain is ATP-dependent protease subunit HslV from Rhizobium johnstonii (strain DSM 114642 / LMG 32736 / 3841) (Rhizobium leguminosarum bv. viciae).